A 503-amino-acid polypeptide reads, in one-letter code: Interferon regulatory factor 7 (503 aa).

Residues 11-126 (RVLFGEWLLG…DPHKVYALSR (116 aa)) constitute a DNA-binding region (IRF tryptophan pentad repeat). A disordered region spans residues 69–88 (RWPPSSRGGGPPPEAETAER). Position 92 is an N6-acetyllysine; by KAT2A and KAT2B (Lys-92). 2 disordered regions span residues 133 to 156 (GPGT…GPPG) and 242 to 277 (TTPS…SPSA). Over residues 146–156 (AVPPPQGGPPG) the composition is skewed to pro residues. The necessary for the interaction with NMI stretch occupies residues 284–456 (PSPGALDVTI…SLVLVKLEPW (173 aa)). Lys-375 is covalently cross-linked (Glycyl lysine isopeptide (Lys-Gly) (interchain with G-Cter in ubiquitin)). Residues Lys-444 and Lys-446 each participate in a glycyl lysine isopeptide (Lys-Gly) (interchain with G-Cter in SUMO) cross-link. 3 positions are modified to phosphoserine: Ser-471, Ser-472, and Ser-475. A phosphoserine; by TBK1 and IKKE mark is found at Ser-477 and Ser-479. Ser-483, Ser-484, and Ser-487 each carry phosphoserine.

The protein belongs to the IRF family. In terms of assembly, monomer. Homodimer; phosphorylation-induced. Heterodimer with IRF3. Interacts with TICAM1 and TICAM2. Interacts with MYD88 and TRAF6. Interacts with TRIM35. Interacts with NMI; the interaction is direct and leads to the inhibition of IRF7-mediated type I IFN production. Interacts with GBP4; preventing interaction between TRAF6 and IRF7, resulting in impaired TRAF6-mediated IRF7 ubiquitination. (Microbial infection) Interacts with Epstein-Barr virus LF2 and LMP1. As to quaternary structure, (Microbial infection) Interacts with rotavirus A NSP1; this interaction leads to the proteasome-dependent degradation of IRF7. In terms of assembly, (Microbial infection) Interacts with human herpes virus 8/HHV-8 proteins ORF45 and vIRF-1. (Microbial infection) Interacts with human T-cell leukemia virus 1/HTLV-1 protein HBZ. As to quaternary structure, (Microbial infection) Interacts with Seneca Valley virus protease 3C; this interaction is involved in the suppression of IRF7 expression and phosphorylation by the virus. In terms of assembly, (Microbial infection) Interacts with ebolavirus VP35; this interaction mediates the sumoylation of IRF7 and contributes to the viral inhibition of IFN-type I production. (Microbial infection) Interacts with severe fever with thrombocytopenia syndrome virus (SFTSV) NSs; this interaction sequesters IRF7 in NSs-induced cytoplasmic inclusion bodies. As to quaternary structure, (Microbial infection) Interacts with herpes virus 8/HHV-8 protein vIRF-4; this interaction prevents IRF7 dimerization and subsequent activation. In terms of assembly, (Microbial infection) Interacts with human metapneumovirus protein M2-2; this interaction prevents IRF7 phosphorlyation and subsequent TLR7/9-dependent IFN-alpha induction. Acetylation inhibits its DNA-binding ability and activity. In terms of processing, in response to a viral infection, phosphorylated on Ser-477 and Ser-479 by TBK1 and IKBKE1. Phosphorylation, and subsequent activation is inhibited by vaccinia virus protein E3. In TLR7- and TLR9-mediated signaling pathway, phosphorylated by IRAK1. Post-translationally, TRAF6-mediated ubiquitination is required for IRF7 activation. TRIM35 mediates IRF7 'Lys-48'-linked polyubiquitination and subsequent proteasomal degradation. Ubiquitinated by UBE3C, leading to its degradation. Sumoylated by TRIM28, which inhibits its transactivation activity. In terms of processing, (Microbial infection) Cleaved and inactivated by the protease 3C of enterovirus 71 allowing the virus to disrupt the host type I interferon production. Post-translationally, (Microbial infection) Cleaved and inactivated by the protease 3C of human enterovirus 68D (EV68) allowing the virus to disrupt the host type I interferon production. 'Lys-48'-linked polyubiquitination and subsequent proteasomal degradation is NMI-dependent in response to Sendai virus infection. In terms of processing, 'Lys-63'-linked ubiquitination by NEURL3 promotes IRF7 activation. As to expression, expressed predominantly in spleen, thymus and peripheral blood leukocytes.

It is found in the nucleus. Its subcellular location is the cytoplasm. With respect to regulation, in the absence of viral infection, maintained as a monomer in an autoinhibited state and phosphorylation disrupts this autoinhibition leading to the liberation of the DNA-binding and dimerization activities and its nuclear localization where it can activate type I IFN and ISG genes. In terms of biological role, key transcriptional regulator of type I interferon (IFN)-dependent immune responses and plays a critical role in the innate immune response against DNA and RNA viruses. Regulates the transcription of type I IFN genes (IFN-alpha and IFN-beta) and IFN-stimulated genes (ISG) by binding to an interferon-stimulated response element (ISRE) in their promoters. Can efficiently activate both the IFN-beta (IFNB) and the IFN-alpha (IFNA) genes and mediate their induction via both the virus-activated, MyD88-independent pathway and the TLR-activated, MyD88-dependent pathway. Induces transcription of ubiquitin hydrolase USP25 mRNA in response to lipopolysaccharide (LPS) or viral infection in a type I IFN-dependent manner. Required during both the early and late phases of the IFN gene induction but is more critical for the late than for the early phase. Exists in an inactive form in the cytoplasm of uninfected cells and following viral infection, double-stranded RNA (dsRNA), or toll-like receptor (TLR) signaling, becomes phosphorylated by IKBKE and TBK1 kinases. This induces a conformational change, leading to its dimerization and nuclear localization where along with other coactivators it can activate transcription of the type I IFN and ISG genes. Can also play a role in regulating adaptive immune responses by inducing PSMB9/LMP2 expression, either directly or through induction of IRF1. Binds to the Q promoter (Qp) of EBV nuclear antigen 1 a (EBNA1) and may play a role in the regulation of EBV latency. Can activate distinct gene expression programs in macrophages and regulate the anti-tumor properties of primary macrophages. This is Interferon regulatory factor 7 (IRF7) from Homo sapiens (Human).